Here is a 121-residue protein sequence, read N- to C-terminus: UPF0102 protein Dhaf_3740 (121 aa).

Belongs to the UPF0102 family.

The chain is UPF0102 protein Dhaf_3740 from Desulfitobacterium hafniense (strain DSM 10664 / DCB-2).